Reading from the N-terminus, the 515-residue chain is Signal transduction histidine-protein kinase/phosphatase MprB (515 aa).

The Cytoplasmic portion of the chain corresponds to 1–24; the sequence is MTLPPQPSRLKPPRNTSSLSLRWR. The helical transmembrane segment at 25–45 threads the bilayer; it reads VMLLAMSMVAMVVVLMSVAVY. Topologically, residues 46 to 165 are extracellular; sequence AVVSRALYDD…TGQVLGRLGT (120 aa). The chain crosses the membrane as a helical span at residues 166–186; the sequence is VLLIVGGVGVAVAAIAGGMVA. An HAMP domain is found at 187-239; the sequence is RAGLRPVGRLTQAAERVARTDDLRPIPVFGSDELARLTEAFNMMLRALTESRE. The Cytoplasmic segment spans residues 187-515; sequence RAGLRPVGRL…GKSRSASKEL (329 aa). The region spanning 247-467 is the Histidine kinase domain; sequence DAGHELRTPL…SFYVMLPGRP (221 aa). His250 carries the phosphohistidine; by autocatalysis modification. A disordered region spans residues 468-515; sequence LTPGGNGTAPVPAAQFDPDMRSAGSRADRRVIKNTETNGKSRSASKEL.

Mg(2+) is required as a cofactor. It depends on Mn(2+) as a cofactor. In terms of processing, autophosphorylated.

It localises to the cell membrane. It catalyses the reaction ATP + protein L-histidine = ADP + protein N-phospho-L-histidine.. In terms of biological role, member of the two-component regulatory system MprB/MprA which contributes to maintaining a balance among several systems involved in stress resistance and is required for establishment and maintenance of persistent infection in the host. In response to environmental signals MprB acts both as a membrane-associated protein kinase that undergoes autophosphorylation and subsequently transfers the phosphate to MprA, and a protein phosphatase that dephosphorylates phospho-MprA. In Mycobacterium sp. (strain JLS), this protein is Signal transduction histidine-protein kinase/phosphatase MprB (mprB).